The sequence spans 331 residues: Uroporphyrinogen decarboxylase (331 aa).

Substrate contacts are provided by residues 22 to 26 (RQAGR), Asp71, Tyr145, Ser199, and His308.

The protein belongs to the uroporphyrinogen decarboxylase family. In terms of assembly, homodimer.

It is found in the cytoplasm. The catalysed reaction is uroporphyrinogen III + 4 H(+) = coproporphyrinogen III + 4 CO2. It functions in the pathway porphyrin-containing compound metabolism; protoporphyrin-IX biosynthesis; coproporphyrinogen-III from 5-aminolevulinate: step 4/4. Catalyzes the decarboxylation of four acetate groups of uroporphyrinogen-III to yield coproporphyrinogen-III. In Picrophilus torridus (strain ATCC 700027 / DSM 9790 / JCM 10055 / NBRC 100828 / KAW 2/3), this protein is Uroporphyrinogen decarboxylase.